Reading from the N-terminus, the 369-residue chain is Serine proteinase inhibitor 1 (369 aa).

It belongs to the serpin family. Poxviruses subfamily.

In terms of biological role, important in virulence. This is Serine proteinase inhibitor 1 (SPI-1) from Oryctolagus cuniculus (Rabbit).